The following is a 237-amino-acid chain: 7-cyano-7-deazaguanine synthase (237 aa).

9–19 (YSGGLDSTTCL) is a binding site for ATP. Residues C189, C199, C202, and C205 each contribute to the Zn(2+) site.

It belongs to the QueC family. Zn(2+) is required as a cofactor.

It catalyses the reaction 7-carboxy-7-deazaguanine + NH4(+) + ATP = 7-cyano-7-deazaguanine + ADP + phosphate + H2O + H(+). The protein operates within purine metabolism; 7-cyano-7-deazaguanine biosynthesis. Its function is as follows. Catalyzes the ATP-dependent conversion of 7-carboxy-7-deazaguanine (CDG) to 7-cyano-7-deazaguanine (preQ(0)). The protein is 7-cyano-7-deazaguanine synthase of Geobacter metallireducens (strain ATCC 53774 / DSM 7210 / GS-15).